Here is a 705-residue protein sequence, read N- to C-terminus: Polyribonucleotide nucleotidyltransferase (705 aa).

Asp492 and Asp498 together coordinate Mg(2+). Residues 559–618 enclose the KH domain; sequence PLMITMKVSPDKIRHIIGPGGKIINKIIDETGVEIDIDDDGSVYILAQDQESGNRAKEII. The region spanning 628–696 is the S1 motif domain; it reads GDIYEGRVKK…ELGRINLSRK (69 aa).

The protein belongs to the polyribonucleotide nucleotidyltransferase family. It depends on Mg(2+) as a cofactor.

The protein localises to the cytoplasm. The catalysed reaction is RNA(n+1) + phosphate = RNA(n) + a ribonucleoside 5'-diphosphate. Involved in mRNA degradation. Catalyzes the phosphorolysis of single-stranded polyribonucleotides processively in the 3'- to 5'-direction. This chain is Polyribonucleotide nucleotidyltransferase, found in Halothermothrix orenii (strain H 168 / OCM 544 / DSM 9562).